Consider the following 343-residue polypeptide: UBP1-associated proteins 1A (343 aa).

The tract at residues 1 to 61 (MAKTLDKSKK…SESDNEFDPE (61 aa)) is disordered. Low complexity predominate over residues 28–49 (NKQQQQPESSTPYSSSSSSSDS). The segment covering 50-61 (SDSESDNEFDPE) has biased composition (acidic residues). The RRM domain maps to 104–181 (RKIFVYGLPW…RTATCQLASM (78 aa)). The tract at residues 312–343 (STYPDSDAGGKRGTGKDSDAGGSSFHGYSNYS) is disordered. The span at 319 to 330 (AGGKRGTGKDSD) shows a compositional bias: basic and acidic residues.

As to quaternary structure, interacts with UBA1A, UBA2A, UBP1A, UBP1B and UBP1C.

It localises to the nucleus. Functionally, acts as a component of a complex regulating the turnover of mRNAs in the nucleus. Binds with high affinity to RNA molecules that contain U-rich sequences in 3'-UTRs. May function in complex with UBP1 and contribute to the stabilization of mRNAs in the nucleus. However, unlike UBP1, UBA1A does not stimulate pre-mRNA splicing. This Arabidopsis thaliana (Mouse-ear cress) protein is UBP1-associated proteins 1A (UBA1A).